Here is a 366-residue protein sequence, read N- to C-terminus: MTPEHLPTEQYEAQLAEKVVRLQSMMAPFSDLVPEVFRSPVSHYRMRAEFRIWHDGDDLYHIIFDQQTKSRIRVDSFPAASELINQLMTAMIAGVRNNPVLRHKLFQIDYLTTLSNQAVVSLLYHKKLDDEWRQEAEALRDALRAQNLNVHLIGRATKTKIELDQDYIDERLPVAGKEMIYRQVENSFTQPNAAMNIQMLEWALDVTKGSKGDLLELYCGNGNFSLALARNFDRVLATEIAKPSVAAAQYNIAANHIDNVQIIRMAAEEFTQAMNGVREFNRLQGIDLKSYQCETIFVDPPRSGLDSETEKMVQAYPCILYISCNPETLCKNLETLSQTHKVERLALFDQFPYTHHMECGVLLTAK.

The S-adenosyl-L-methionine site is built by Q190, Y218, N223, E239, and D299. C324 functions as the Nucleophile in the catalytic mechanism. Catalysis depends on E358, which acts as the Proton acceptor.

This sequence belongs to the class I-like SAM-binding methyltransferase superfamily. RNA M5U methyltransferase family. TrmA subfamily.

The catalysed reaction is uridine(54) in tRNA + S-adenosyl-L-methionine = 5-methyluridine(54) in tRNA + S-adenosyl-L-homocysteine + H(+). It carries out the reaction uridine(341) in tmRNA + S-adenosyl-L-methionine = 5-methyluridine(341) in tmRNA + S-adenosyl-L-homocysteine + H(+). In terms of biological role, dual-specificity methyltransferase that catalyzes the formation of 5-methyluridine at position 54 (m5U54) in all tRNAs, and that of position 341 (m5U341) in tmRNA (transfer-mRNA). The sequence is that of tRNA/tmRNA (uracil-C(5))-methyltransferase from Shigella boydii serotype 18 (strain CDC 3083-94 / BS512).